The sequence spans 257 residues: Protein-tyrosine-phosphatase IBR5 (257 aa).

The region spanning 49 to 185 (FPSEILPEFL…LQEFEQGIFG (137 aa)) is the Tyrosine-protein phosphatase domain. The active-site Phosphocysteine intermediate is C129. The interval 235–257 (QEFTFGATPPKPTTGGDIAMDGS) is disordered.

The protein belongs to the protein-tyrosine phosphatase family. Interacts with SKP1A/ASK1 and with MPK12. In terms of tissue distribution, expressed in root tips and vasculature, cotyledons, stems, leaves vasculature and hydathodes, flowers, siliques, and seeds.

It localises to the nucleus. The catalysed reaction is O-phospho-L-tyrosyl-[protein] + H2O = L-tyrosyl-[protein] + phosphate. In terms of biological role, required for the transduction of auxin and abscisic acid (ABA) signaling pathways. Dephosphorylates and inactivates the MAP kinase MPK12. The polypeptide is Protein-tyrosine-phosphatase IBR5 (IBR5) (Arabidopsis thaliana (Mouse-ear cress)).